The sequence spans 127 residues: Fluoride-specific ion channel FluC (127 aa).

A run of 4 helical transmembrane segments spans residues 4–24, 38–58, 71–91, and 104–124; these read LSVL…RYLI, YGTL…IAAF, IIGL…MDNV, and LNVL…FQLL. 2 residues coordinate Na(+): Gly-78 and Thr-81.

Belongs to the fluoride channel Fluc/FEX (TC 1.A.43) family.

It localises to the cell inner membrane. It carries out the reaction fluoride(in) = fluoride(out). Na(+) is not transported, but it plays an essential structural role and its presence is essential for fluoride channel function. In terms of biological role, fluoride-specific ion channel. Important for reducing fluoride concentration in the cell, thus reducing its toxicity. The polypeptide is Fluoride-specific ion channel FluC (Vibrio campbellii (strain ATCC BAA-1116)).